The sequence spans 355 residues: NAD-dependent protein deacylase sirtuin-6 (355 aa).

At S2 the chain carries N-acetylserine. S10 carries the post-translational modification Phosphoserine. Residues 27 to 272 (PEELERKVWE…TQLMKHLGLE (246 aa)) form the Deacetylase sirtuin-type domain. Residue K33 is modified to N6-acetyllysine. NAD(+)-binding residues include A53, T57, F64, R65, W71, Q113, and H133. H133 serves as the catalytic Proton acceptor. Zn(2+)-binding residues include C141, C144, and C166. Residue K170 forms a Glycyl lysine isopeptide (Lys-Gly) (interchain with G-Cter in ubiquitin) linkage. C177 contributes to the Zn(2+) binding site. Residues G214, S216, N240, Q242, and V258 each coordinate NAD(+). Residues 284-355 (KALPPLPRPP…KRVKAEVTPS (72 aa)) are disordered. A compositionally biased stretch (pro residues) spans 287 to 296 (PPLPRPPTPK). T294 is modified (phosphothreonine). 2 positions are modified to phosphoserine: S303 and S330.

It belongs to the sirtuin family. Class IV subfamily. In terms of assembly, homodimer; binds to nucleosomes and DNA ends as a homodimer. Interacts with RELA; interferes with RELA binding to target DNA. Interacts with SMARCA5; promoting recruitment of SMARCA5/SNF2H to double-strand breaks (DSBs) sites. Interacts with the mTORC2 complex; preventing the ability of SIRT6 to deacetylate FOXO1. Interacts with the CLOCK-BMAL1 complex; recruited by the CLOCK-BMAL1 complex to regulate expression of clock-controlled genes. Interacts with CSNK2A2; preventing CSNK2A2 localization to the nucleus. In terms of processing, acetylated at Lys-33. Deacetylation at Lys-33 by SIRT1 promotes homomultimerization and binding to double-strand breaks (DSBs) sites. Post-translationally, phosphorylation at Ser-10 by MAPK8/JNK1 in response to oxidative stress stimulates the mono-ADP-ribosyltransferase activity on PARP1, leading to PARP1 recruitment to double-strand breaks (DSBs). Monoubiquitinated at Lys-170 by STUB1/CHIP, preventing its degradation by the proteasome. In terms of processing, sumoylated, leading to specifically decrease ability to deacetylate histone H3 at 'Lys-56' (H3K56ac).

It is found in the nucleus. The protein localises to the chromosome. It localises to the telomere. The protein resides in the endoplasmic reticulum. It carries out the reaction N(6)-acetyl-L-lysyl-[protein] + NAD(+) + H2O = 2''-O-acetyl-ADP-D-ribose + nicotinamide + L-lysyl-[protein]. The enzyme catalyses N(6)-tetradecanoyl-L-lysyl-[protein] + NAD(+) + H2O = 2''-O-tetradecanoyl-ADP-D-ribose + nicotinamide + L-lysyl-[protein]. The catalysed reaction is N(6)-hexadecanoyl-L-lysyl-[protein] + NAD(+) + H2O = 2''-O-hexadecanoyl-ADP-D-ribose + nicotinamide + L-lysyl-[protein]. It catalyses the reaction L-lysyl-[protein] + NAD(+) = N(6)-(ADP-D-ribosyl)-L-lysyl-[protein] + nicotinamide + H(+). It carries out the reaction L-arginyl-[protein] + NAD(+) = N(omega)-(ADP-D-ribosyl)-L-arginyl-[protein] + nicotinamide + H(+). Its activity is regulated as follows. Compared to the defatty-acylase activity, the protein deacetylase activity is weak in vitro, and requires activation. The histone deacetylase activity is strongly activated upon binding to nucleosomes and chromatin in vivo. Two molecules of SIRT6 associate with the acidic patch of one nucleosome, while the C-terminal disordered region of SIRT6 associates with nucleosomal DNA, leading to efficient histone deacetylation. The protein-lysine deacetylase activity is also activated by long-chain free fatty-acids. NAD-dependent protein deacetylase, deacylase and mono-ADP-ribosyltransferase that plays an essential role in DNA damage repair, telomere maintenance, metabolic homeostasis, inflammation, tumorigenesis and aging. Displays protein-lysine deacetylase or defatty-acylase (demyristoylase and depalmitoylase) activity, depending on the context. Acts as a key histone deacetylase by catalyzing deacetylation of histone H3 at 'Lys-9', 'Lys-18' and 'Lys-56' (H3K9ac, H3K18ac and H3K56ac, respectively), suppressing target gene expression of several transcription factors, including NF-kappa-B. Acts as an inhibitor of transcription elongation by mediating deacetylation of H3K9ac and H3K56ac, preventing release of NELFE from chromatin and causing transcriptional pausing. Involved in DNA repair by promoting double-strand break (DSB) repair: acts as a DSB sensor by recognizing and binding DSB sites, leading to (1) recruitment of DNA repair proteins, such as SMARCA5/SNF2H, and (2) deacetylation of histone H3K9ac and H3K56ac. SIRT6 participation to DSB repair is probably involved in extension of life span. Also promotes DNA repair by deacetylating non-histone proteins, such as DDB2 and p53/TP53. Specifically deacetylates H3K18ac at pericentric heterochromatin, thereby maintaining pericentric heterochromatin silencing at centromeres and protecting against genomic instability and cellular senescence. Involved in telomere maintenance by catalyzing deacetylation of histone H3 in telomeric chromatin, regulating telomere position effect and telomere movement in response to DNA damage. Required for embryonic stem cell differentiation by mediating histone deacetylation of H3K9ac. Plays a major role in metabolism by regulating processes such as glycolysis, gluconeogenesis, insulin secretion and lipid metabolism. Inhibits glycolysis via histone deacetylase activity and by acting as a corepressor of the transcription factor HIF1A, thereby controlling the expression of multiple glycolytic genes. Has tumor suppressor activity by repressing glycolysis, thereby inhibiting the Warburg effect. Also regulates glycolysis and tumorigenesis by mediating deacetylation and nuclear export of non-histone proteins, such as isoform M2 of PKM (PKM2). Acts as a negative regulator of gluconeogenesis by mediating deacetylation of non-histone proteins, such as FOXO1 and KAT2A/GCN5. Promotes beta-oxidation of fatty acids during fasting by catalyzing deacetylation of NCOA2, inducing coactivation of PPARA. Acts as a regulator of lipid catabolism in brown adipocytes, both by catalyzing deacetylation of histones and non-histone proteins, such as FOXO1. Also acts as a regulator of circadian rhythms, both by regulating expression of clock-controlled genes involved in lipid and carbohydrate metabolism, and by catalyzing deacetylation of PER2. The defatty-acylase activity is specifically involved in regulation of protein secretion. Has high activity toward long-chain fatty acyl groups and mediates protein-lysine demyristoylation and depalmitoylation of target proteins, such as RRAS2 and TNF, thereby regulating their secretion. Also acts as a mono-ADP-ribosyltransferase by mediating mono-ADP-ribosylation of PARP1, TRIM28/KAP1 or SMARCC2/BAF170. Mono-ADP-ribosyltransferase activity is involved in DNA repair, cellular senescence, repression of LINE-1 retrotransposon elements and regulation of transcription. The polypeptide is NAD-dependent protein deacylase sirtuin-6 (Castor canadensis (American beaver)).